Consider the following 400-residue polypeptide: Probable peptidoglycan glycosyltransferase FtsW (400 aa).

The Cytoplasmic portion of the chain corresponds to 1-29; that stretch reads MVIERIKHLASPLQDWVFTPSPKVMFDRQ. Residues 30-50 form a helical membrane-spanning segment; that stretch reads LIWIALGLMLTGLVMVASASF. The Periplasmic portion of the chain corresponds to 51 to 60; sequence PISTRLTGQP. A helical membrane pass occupies residues 61–81; that stretch reads FHFMMRHMLFVFLALSISSIV. Residues 82-95 lie on the Cytoplasmic side of the membrane; it reads LRIELNKWLKYSSH. The helical transmembrane segment at 96–116 threads the bilayer; that stretch reads LLLISLLLLAAVLVVGKSVNG. The Periplasmic segment spans residues 117-122; sequence AARWLP. The helical transmembrane segment at 123–143 threads the bilayer; that stretch reads LGIFNLQPAEVAKLSLFVFIA. At 144–155 the chain is on the cytoplasmic side; that stretch reads GYLVRRHGEVRD. A helical transmembrane segment spans residues 156–176; it reads SFRGFVKPLLVLITLAFFLLM. The Periplasmic portion of the chain corresponds to 177–178; that stretch reads QP. The helical transmembrane segment at 179–199 threads the bilayer; the sequence is DLGTTVVMFVTTIAMLFIAGA. Residue Lys200 is a topological domain, cytoplasmic. Residues 201–221 form a helical membrane-spanning segment; sequence LWQFIALVMGGISLVIVLILA. The Periplasmic portion of the chain corresponds to 222–290; sequence EPYRMRRVTS…VFAVIAEELG (69 aa). The helical transmembrane segment at 291–311 threads the bilayer; sequence FVGVCLVLCLIFALVFKALLI. The Cytoplasmic segment spans residues 312 to 321; the sequence is GRKCLAHDQR. The chain crosses the membrane as a helical span at residues 322 to 342; the sequence is FGGFLAFGIGIWFAFQTLVNV. The Periplasmic portion of the chain corresponds to 343–356; it reads GAAAGIVPTKGLTL. Residues 357-377 traverse the membrane as a helical segment; the sequence is PLISYGGSSLIIMSVAVSLLI. At 378-400 the chain is on the cytoplasmic side; the sequence is RIDHECRVYLANEPPRSENEEQK.

The protein belongs to the SEDS family. FtsW subfamily.

It localises to the cell inner membrane. It catalyses the reaction [GlcNAc-(1-&gt;4)-Mur2Ac(oyl-L-Ala-gamma-D-Glu-L-Lys-D-Ala-D-Ala)](n)-di-trans,octa-cis-undecaprenyl diphosphate + beta-D-GlcNAc-(1-&gt;4)-Mur2Ac(oyl-L-Ala-gamma-D-Glu-L-Lys-D-Ala-D-Ala)-di-trans,octa-cis-undecaprenyl diphosphate = [GlcNAc-(1-&gt;4)-Mur2Ac(oyl-L-Ala-gamma-D-Glu-L-Lys-D-Ala-D-Ala)](n+1)-di-trans,octa-cis-undecaprenyl diphosphate + di-trans,octa-cis-undecaprenyl diphosphate + H(+). The protein operates within cell wall biogenesis; peptidoglycan biosynthesis. Peptidoglycan polymerase that is essential for cell division. In Aliivibrio salmonicida (strain LFI1238) (Vibrio salmonicida (strain LFI1238)), this protein is Probable peptidoglycan glycosyltransferase FtsW.